Consider the following 607-residue polypeptide: SNW/SKI-interacting protein A (607 aa).

Disordered stretches follow at residues 29-77, 178-205, 217-265, 327-434, and 516-607; these read ERYG…GGAF, AQPKNVPTHDSESKFIKYKPSQQSAAFN, EMAQ…IPPC, LQLK…DRDR, and KVMK…ERGR. The segment covering 35-49 has biased composition (low complexity); it reads SAQSDAAAAAAKPSG. Residues 190 to 353 form an SNW region; it reads SKFIKYKPSQ…QKARMERTGA (164 aa). The segment covering 240 to 251 has biased composition (pro residues); sequence PPVPVMHSPPRP. Coiled-coil stretches lie at residues 313–349 and 391–418; these read AREAVQMRSKVQRELQLKEKERKEQELRALAQKARME and EREARIERDRIREERRRERERERRLEAR. Basic and acidic residues-rich tracts occupy residues 327–339, 379–434, 516–527, 535–550, and 562–571; these read LQLKEKERKEQEL, EQPR…DRDR, KVMKTDRFKPDK, RSGKRDRPVEFDKQEE, and EVKKGKKAVE.

It belongs to the SNW family. In terms of assembly, interacts with FLO6/SIP4. Interacts with DIS1. As to expression, widely expressed.

The protein localises to the nucleus. Acts as a positive regulator of drought and salt tolerance. Acts as a positive regulator of cell viability. This Oryza sativa subsp. japonica (Rice) protein is SNW/SKI-interacting protein A.